Reading from the N-terminus, the 105-residue chain is MYAVVASGGKQHRVAVGDVVDVELLSGEPGAAVNLPAVLLVDGESVTHDADALASVEVTAEVVGVVKGPKIRIHKFKNKTGYHKRQGHRQKYTRLKVTGIETGKA.

Belongs to the bacterial ribosomal protein bL21 family. As to quaternary structure, part of the 50S ribosomal subunit. Contacts protein L20.

Its function is as follows. This protein binds to 23S rRNA in the presence of protein L20. This chain is Large ribosomal subunit protein bL21, found in Parafrankia sp. (strain EAN1pec).